An 86-amino-acid chain; its full sequence is YSQVKKEKEQGCYEDFIECLKLYDKEENGTMMLAELQHALLALGESLDDEQVETLFADCMDPEDDEGFIPYSQFIQRLMSDPVVFD.

The region spanning 11–46 is the EF-hand domain; it reads GCYEDFIECLKLYDKEENGTMMLAELQHALLALGES.

Myosin is a hexamer of 2 heavy chains and 4 light chains.

In Drosophila subobscura (Fruit fly), this protein is Myosin light chain alkali (Mlc1).